Consider the following 363-residue polypeptide: MNELLLNVVDPLHQWFLGLGDGGVLLWTVLKILLIAVPVIVTVAFYVVWERKLIGWMHVRHGPMYVGMGIFQAFADVFKLLFKEILQPSSSHKAMFIIAPLLTLAPAFAAWSVVPFDAKLVLSNANVGLLYLLAMTSLGVYGIILAGWASNSKYAFLGAMRSAAQVVSYEIAMGFALVGVMIASGSVNLSQIVFAQAGSSGFFDWFLIPLFPLFIVYWVSGVAETNRAPFDVVEGESEIVAGHMVEYSGGAFALFFLAEYANMILVSFLISIFFLGGWLSPIQGWVTADISPWVNWLWTGGWPWLLMKVFFFASAYIWFRASFPRYRYDQIMRLGWKVFIPLTIVWIAVTALMVFYGVIQKGV.

The next 10 helical transmembrane spans lie at 29 to 49 (VLKI…YVVW), 62 to 82 (GPMY…KLLF), 96 to 116 (FIIA…VVPF), 127 to 147 (VGLL…ILAG), 163 to 183 (AAQV…VMIA), 202 to 222 (FFDW…VSGV), 239 to 257 (IVAG…LFFL), 264 to 286 (ILVS…QGWV), 299 to 319 (TGGW…YIWF), and 339 to 359 (FIPL…YGVI).

Belongs to the complex I subunit 1 family. As to quaternary structure, NDH-1 is composed of 14 different subunits. Subunits NuoA, H, J, K, L, M, N constitute the membrane sector of the complex.

It is found in the cell inner membrane. The catalysed reaction is a quinone + NADH + 5 H(+)(in) = a quinol + NAD(+) + 4 H(+)(out). NDH-1 shuttles electrons from NADH, via FMN and iron-sulfur (Fe-S) centers, to quinones in the respiratory chain. The immediate electron acceptor for the enzyme in this species is believed to be ubiquinone. Couples the redox reaction to proton translocation (for every two electrons transferred, four hydrogen ions are translocated across the cytoplasmic membrane), and thus conserves the redox energy in a proton gradient. This subunit may bind ubiquinone. The protein is NADH-quinone oxidoreductase subunit H of Xanthomonas campestris pv. campestris (strain 8004).